A 596-amino-acid chain; its full sequence is Sodium/mannose cotransporter SLC5A10 (596 aa).

The Extracellular portion of the chain corresponds to 1–15; that stretch reads MAANSTSDLHTPGTQ. N-linked (GlcNAc...) asparagine glycosylation is present at Asn4. The chain crosses the membrane as a helical span at residues 16–36; it reads LSVADIIVITVYFALNVAVGI. Residues 37 to 72 are Cytoplasmic-facing; it reads WSSCRASRNTVNGYFLAGRDMTWWPIGASLFASSEG. Residues 73 to 93 traverse the membrane as a helical segment; it reads SGLFIGLAGSGAAGGLAVAGF. Residues 94 to 99 lie on the Extracellular side of the membrane; the sequence is EWNATY. N-linked (GlcNAc...) asparagine glycosylation occurs at Asn96. A helical transmembrane segment spans residues 100 to 120; that stretch reads VLLALAWVFVPIYISSEIVTL. At 121 to 149 the chain is on the cytoplasmic side; sequence PEYIQKRYGGQRIRMYLSVLSLLLSVFTK. A phosphoserine mark is found at Ser141 and Ser145. Thr148 carries the post-translational modification Phosphothreonine. The helical transmembrane segment at 150-170 threads the bilayer; sequence ISLDLYAGALFVHICLGWNFY. Over 171–173 the chain is Extracellular; sequence LST. Residues 174 to 194 form a helical membrane-spanning segment; that stretch reads ILTLGITALYTIAGGLAAVIY. Residues 195–200 lie on the Cytoplasmic side of the membrane; that stretch reads TDALQT. Residues 201-221 form a helical membrane-spanning segment; it reads LIMVVGAVILTIKAFDQIGGY. Residues 222-264 are Extracellular-facing; it reads GQLEAAYAQAIPSRTIANTTCHLPRTDAMHMFRDPHTGDLPWT. Residues 265 to 285 form a helical membrane-spanning segment; it reads GMTFGLTIMATWYWCTDQVIV. Residues 286-300 lie on the Cytoplasmic side of the membrane; that stretch reads QRSLSARDLNHAKAG. Residues 301 to 321 form a helical membrane-spanning segment; that stretch reads SILASYLKMLPMGLIIMPGMI. The Extracellular segment spans residues 322–355; it reads SRALFPDDVGCVVPSECLRACGAEVGCSNIAYPK. The helical transmembrane segment at 356–376 threads the bilayer; the sequence is LVMELMPIGLRGLMIAVMLAA. The Cytoplasmic segment spans residues 377 to 409; sequence LMSSLTSIFNSSSTLFTMDIWRRLRPRSGEREL. Residues 410–430 form a helical membrane-spanning segment; the sequence is LLVGRLVIVALIGVSVAWIPV. The Extracellular segment spans residues 431–443; sequence LQDSNSGQLFIYM. A helical transmembrane segment spans residues 444–464; it reads QSVTSSLAPPVTAVFVLGVFW. The Cytoplasmic portion of the chain corresponds to 465-471; sequence RRANEQG. The chain crosses the membrane as a helical span at residues 472 to 492; that stretch reads AFWGLIAGLVVGATRLVLEFL. Topologically, residues 493-513 are extracellular; the sequence is NPAPPCGEPDTRPAVLGSIHY. A helical membrane pass occupies residues 514 to 534; sequence LHFAVALFALSGAVVVAGSLL. At 535-575 the chain is on the cytoplasmic side; sequence TPPPQSVQIENLTWWTLAQDVPLGTKAGDGQTPQKHAFWAR. Residues 576 to 596 traverse the membrane as a helical segment; that stretch reads VCGFNAILLMCVNIFFYAYFA.

This sequence belongs to the sodium:solute symporter (SSF) (TC 2.A.21) family. Predominantly expressed at high levels in kidney. Very low expression is detected in testes. In terms of tissue distribution, expressed in kidney. As to expression, the most abundant isoform expressed in kidney.

It is found in the apical cell membrane. The enzyme catalyses D-mannose(out) + Na(+)(out) = D-mannose(in) + Na(+)(in). The catalysed reaction is D-fructopyranose(out) + Na(+)(out) = D-fructopyranose(in) + Na(+)(in). Inhibited by phlorizin. Functionally, electrogenic Na+-coupled sugar symporter that actively transports D-mannose or D-fructose at the plasma membrane, with a Na+ to sugar coupling ratio of 1:1. Transporter activity is driven by a transmembrane Na+ electrochemical gradient set by the Na+/K+ pump. Exclusively recognizes sugar substrates having a pyranose ring with an axial hydroxyl group on carbon 2. Has likely evolved to enable renal reabsorption of D-mannose, an important constituent of oligosaccharide chains of glycoproteins. Contributes to dietary D-fructose reabsorption from glomerular filtrate across the brush border of the kidney. In terms of biological role, appears to have no transporter activity. The protein is Sodium/mannose cotransporter SLC5A10 (SLC5A10) of Homo sapiens (Human).